Reading from the N-terminus, the 338-residue chain is Holliday junction branch migration complex subunit RuvB (338 aa).

The tract at residues 1 to 180 (MERLLDNKFS…FGIIERLDYY (180 aa)) is large ATPase domain (RuvB-L). ATP contacts are provided by Leu19, Arg20, Gly61, Lys64, Thr65, Thr66, Arg170, Tyr180, and Arg217. Thr65 is a binding site for Mg(2+). Residues 181–251 (TVEELSQIVM…VAKSGLEMFE (71 aa)) form a small ATPAse domain (RuvB-S) region. The head domain (RuvB-H) stretch occupies residues 254 to 338 (EYGLDLVDRN…FKLKESGDNR (85 aa)). DNA-binding residues include Lys309 and Arg314.

Belongs to the RuvB family. Homohexamer. Forms an RuvA(8)-RuvB(12)-Holliday junction (HJ) complex. HJ DNA is sandwiched between 2 RuvA tetramers; dsDNA enters through RuvA and exits via RuvB. An RuvB hexamer assembles on each DNA strand where it exits the tetramer. Each RuvB hexamer is contacted by two RuvA subunits (via domain III) on 2 adjacent RuvB subunits; this complex drives branch migration. In the full resolvosome a probable DNA-RuvA(4)-RuvB(12)-RuvC(2) complex forms which resolves the HJ.

It is found in the cytoplasm. The catalysed reaction is ATP + H2O = ADP + phosphate + H(+). In terms of biological role, the RuvA-RuvB-RuvC complex processes Holliday junction (HJ) DNA during genetic recombination and DNA repair, while the RuvA-RuvB complex plays an important role in the rescue of blocked DNA replication forks via replication fork reversal (RFR). RuvA specifically binds to HJ cruciform DNA, conferring on it an open structure. The RuvB hexamer acts as an ATP-dependent pump, pulling dsDNA into and through the RuvAB complex. RuvB forms 2 homohexamers on either side of HJ DNA bound by 1 or 2 RuvA tetramers; 4 subunits per hexamer contact DNA at a time. Coordinated motions by a converter formed by DNA-disengaged RuvB subunits stimulates ATP hydrolysis and nucleotide exchange. Immobilization of the converter enables RuvB to convert the ATP-contained energy into a lever motion, pulling 2 nucleotides of DNA out of the RuvA tetramer per ATP hydrolyzed, thus driving DNA branch migration. The RuvB motors rotate together with the DNA substrate, which together with the progressing nucleotide cycle form the mechanistic basis for DNA recombination by continuous HJ branch migration. Branch migration allows RuvC to scan DNA until it finds its consensus sequence, where it cleaves and resolves cruciform DNA. The protein is Holliday junction branch migration complex subunit RuvB of Caldicellulosiruptor bescii (strain ATCC BAA-1888 / DSM 6725 / KCTC 15123 / Z-1320) (Anaerocellum thermophilum).